We begin with the raw amino-acid sequence, 229 residues long: Cytidylate kinase (229 aa).

12–20 (GPSGTGKSS) provides a ligand contact to ATP.

This sequence belongs to the cytidylate kinase family. Type 1 subfamily.

It is found in the cytoplasm. It catalyses the reaction CMP + ATP = CDP + ADP. The enzyme catalyses dCMP + ATP = dCDP + ADP. The protein is Cytidylate kinase of Rhodococcus opacus (strain B4).